The following is a 149-amino-acid chain: Transcriptional repressor NrdR (149 aa).

A zinc finger lies at 3–34; the sequence is CPFCFAVDTKVIDSRLVGGGSSVRRRRQCLVC. The 91-residue stretch at 49–139 folds into the ATP-cone domain; sequence PRVVKSNDVR…VYRSFEDIKE (91 aa).

This sequence belongs to the NrdR family. The cofactor is Zn(2+).

In terms of biological role, negatively regulates transcription of bacterial ribonucleotide reductase nrd genes and operons by binding to NrdR-boxes. The sequence is that of Transcriptional repressor NrdR from Shigella boydii serotype 18 (strain CDC 3083-94 / BS512).